A 455-amino-acid polypeptide reads, in one-letter code: Yop proteins translocation protein P (455 aa).

Disordered regions lie at residues 38 to 82 (NKGN…QPGR) and 430 to 455 (DFQASDDSEQESRQKRHVYEEWEAEE). Basic and acidic residues-rich tracts occupy residues 43–69 (HPKEESLKPVRPHDLGKKEGQKGDGLR) and 439–449 (QESRQKRHVYE).

The protein belongs to the SpaN family.

The protein localises to the cytoplasm. Functionally, component of the yop secretion machinery. This chain is Yop proteins translocation protein P (yscP), found in Yersinia pseudotuberculosis serotype I (strain IP32953).